A 158-amino-acid polypeptide reads, in one-letter code: Transmembrane protein 50B (158 aa).

Ala-2 is subject to N-acetylalanine. 4 helical membrane passes run 28 to 48, 56 to 76, 98 to 118, and 128 to 148; these read VVAG…AVVY, HAFH…NAVS, WLFI…WILF, and VYPG…TLIY.

The protein belongs to the UPF0220 family. In terms of assembly, may form homotrimers or homodimers.

It is found in the endoplasmic reticulum membrane. Its subcellular location is the golgi apparatus membrane. The polypeptide is Transmembrane protein 50B (TMEM50B) (Bos taurus (Bovine)).